Reading from the N-terminus, the 331-residue chain is Protein REVEILLE 6 (331 aa).

Residues 67 to 121 enclose the HTH myb-type domain; the sequence is TITKSRESWTEPEHDKFLEALQLFDRDWKKIEAFIGSKTVIQIRSHAQKYFLKVQ. Residues 94 to 117 constitute a DNA-binding region (H-T-H motif); it reads WKKIEAFIGSKTVIQIRSHAQKYF. Disordered regions lie at residues 122–166, 203–237, and 309–331; these read KSGT…EPND, LPKAGAGANNNCSSSSENTPRPRSNRDARDHGNVG, and SETATDHGGVNKTLNKDPPEIST. Residues 150–165 show a composition bias toward polar residues; sequence VQLQVPGSFKSTSEPN. The segment covering 211–220 has biased composition (low complexity); sequence NNNCSSSSEN. Composition is skewed to basic and acidic residues over residues 226–235 and 322–331; these read SNRDARDHGN and LNKDPPEIST.

The protein resides in the nucleus. Functionally, probable transcription factor. RVE4, RVE6 and RVE8 are components of the circadian system acting synergistically to regulate flowering time, redundantly to regulate leaf growth, and antagonistically to regulate hypocotyl elongation; their action seems independent of ZTL and HY5. In Arabidopsis thaliana (Mouse-ear cress), this protein is Protein REVEILLE 6.